The following is a 285-amino-acid chain: Diphthine methyl ester synthase (285 aa).

Residues Leu9, Asp84, Gly87, 112–113 (SI), and Leu163 each bind S-adenosyl-L-methionine. At Ser171 the chain carries Phosphoserine. Val225 and His250 together coordinate S-adenosyl-L-methionine.

This sequence belongs to the diphthine synthase family.

It catalyses the reaction 2-[(3S)-amino-3-carboxypropyl]-L-histidyl-[translation elongation factor 2] + 4 S-adenosyl-L-methionine = diphthine methyl ester-[translation elongation factor 2] + 4 S-adenosyl-L-homocysteine + 3 H(+). The protein operates within protein modification; peptidyl-diphthamide biosynthesis. Functionally, S-adenosyl-L-methionine-dependent methyltransferase that catalyzes four methylations of the modified target histidine residue in translation elongation factor 2 (EF-2), to form an intermediate called diphthine methyl ester. The four successive methylation reactions represent the second step of diphthamide biosynthesis. This chain is Diphthine methyl ester synthase (DPH5), found in Bos taurus (Bovine).